A 251-amino-acid polypeptide reads, in one-letter code: uncharacterized protein (251 aa).

The HTH deoR-type domain maps to 3–58; it reads TPERHQLIIDQIEKHDVVKIQELINLTNASESTIRRDLSTLEERGFLKRVHGGAAK. Residues 20–39 constitute a DNA-binding region (H-T-H motif); the sequence is VKIQELINLTNASESTIRRD.

This is an uncharacterized protein from Bacillus subtilis (strain 168).